We begin with the raw amino-acid sequence, 185 residues long: Thymidine kinase (185 aa).

ATP is bound at residue 8–15; it reads GPMYSGKT. The Proton acceptor role is filled by Glu85. Phe117 serves as a coordination point for substrate. The Zn(2+) site is built by Cys142 and Cys145. Position 161–165 (161–165) interacts with substrate; sequence IIEIG. The Zn(2+) site is built by Cys174 and Cys177.

The protein belongs to the thymidine kinase family.

It catalyses the reaction thymidine + ATP = dTMP + ADP + H(+). The chain is Thymidine kinase (TK) from Choristoneura fumiferana entomopoxvirus (CfEPV).